The chain runs to 1128 residues: Exportin-6 (1128 aa).

Residues 31 to 97 (IEELLNSFAG…RSCLPKLLLS (67 aa)) enclose the Importin N-terminal domain.

It belongs to the exportin family.

Its subcellular location is the nucleus. The protein resides in the cytoplasm. Functionally, mediates the nuclear export of actin and profilin-actin complexes in somatic cells. The chain is Exportin-6 (xpo6) from Danio rerio (Zebrafish).